A 483-amino-acid chain; its full sequence is Prenyltransferase vrtC (483 aa).

This sequence belongs to the tryptophan dimethylallyltransferase family.

Its pathway is secondary metabolite biosynthesis; terpenoid biosynthesis. Functionally, prenyltransferase; part of the gene cluster that mediates the biosynthesis of viridicatumtoxin, a tetracycline-like fungal meroterpenoid with a unique, fused spirobicyclic ring system. The first step of the pathway is the production of the malonamoyl-CoA starter unit for the polyketide synthase vrtA. The aldolase vrtJ may be involved in the synthesis of the malonamate substrate for malonamoyl-CoA synthetase vrtB. The polyketide synthase vrtA then may utilize the malonamoyl-CoA starter unit, followed by sequential condensation of eight malonyl-CoA units to form the polyketide backbone. The cyclization of the last ring could be mediated by the lactamase-like protein vrtG. The proposed post-PKS tailoring steps are a hydroxylation at C5 catalyzed the cytochrome P450 monooxygenase vrtE, a hydroxylation at C12a catalyzed by VrtH and/or VrtI, and an O-methylation by the O-methyltransferase vrtF. VrtC is then proposed to catalyze the transfer of a geranyl group synthesized by vrtD to the aromatic C ring of the tetracyclic polyketide intermediate of viridicatumtoxin to yield previridicatumtoxin. Finally, the cytochrome P450 monooxygenase vrtK catalyzes the spirocyclization of the geranyl moiety of previridicatumtoxin to afford viridicatumtoxin. In Penicillium aethiopicum, this protein is Prenyltransferase vrtC.